The following is a 276-amino-acid chain: Kallikrein-10 (276 aa).

A signal peptide spans 1–30 (MRAPHLHLSAASGARALAKLLPLLMAQLWA). The N-linked (GlcNAc...) asparagine glycan is linked to N39. One can recognise a Peptidase S1 domain in the interval 47 to 274 (AYGSPCARGS…YMSWINKVIR (228 aa)). Cystine bridges form between C52–C162, C71–C87, C169–C235, C201–C215, and C225–C250. Residues H86 and D137 each act as charge relay system in the active site. The Charge relay system role is filled by S229.

It belongs to the peptidase S1 family. Kallikrein subfamily. As to expression, expressed in breast, ovary and prostate.

It localises to the secreted. Its function is as follows. Has a tumor-suppressor role for NES1 in breast and prostate cancer. This chain is Kallikrein-10 (KLK10), found in Homo sapiens (Human).